We begin with the raw amino-acid sequence, 47 residues long: uncharacterized protein (47 aa).

The disordered stretch occupies residues 24–47 (FGPNPIEPPTDIAPDPDSTKTWLI).

This is an uncharacterized protein from Mycobacterium tuberculosis (strain ATCC 25618 / H37Rv).